Reading from the N-terminus, the 359-residue chain is Peptide chain release factor 1 (359 aa).

The residue at position 235 (Q235) is an N5-methylglutamine.

Belongs to the prokaryotic/mitochondrial release factor family. Methylated by PrmC. Methylation increases the termination efficiency of RF1.

The protein localises to the cytoplasm. Functionally, peptide chain release factor 1 directs the termination of translation in response to the peptide chain termination codons UAG and UAA. This is Peptide chain release factor 1 from Anaplasma phagocytophilum (strain HZ).